Here is a 718-residue protein sequence, read N- to C-terminus: Zinc finger protein 39 (718 aa).

The KRAB domain occupies 59 to 130 (VSFEDVSVDF…EDVPKQSRAD (72 aa)). The segment at 298–320 (FECSICKKTFCTKCELMKHKKIH) adopts a C2H2-type 1 zinc-finger fold. The C2H2-type 2; degenerate zinc finger occupies 353-375 (HRCKQCEKCFHQKNQQNVHERVP). 11 C2H2-type zinc fingers span residues 409-431 (YGCN…QKIH), 437-459 (YGCE…QRTH), 465-487 (YECK…HRTH), 493-515 (YECD…QKVH), 521-543 (YECE…QKTH), 549-571 (YECN…QGTH), 577-599 (YQCE…QRNH), 605-627 (YACE…QRSH), 633-655 (YSCE…QRTH), 661-683 (YECK…QVTH), and 689-711 (FECQ…QRIH).

Predominantly in the spermatocytes and spermatids of testes.

The protein resides in the nucleus. A putative DNA-binding regulatory protein associated with meiosis in spermatogenesis. The sequence is that of Zinc finger protein 39 (Zfp39) from Mus musculus (Mouse).